We begin with the raw amino-acid sequence, 235 residues long: Glucosamine-6-phosphate deaminase (235 aa).

Asp-62 functions as the Proton acceptor; for enolization step in the catalytic mechanism. Residue Asn-128 is the For ring-opening step of the active site. Residue His-130 is the Proton acceptor; for ring-opening step of the active site. Glu-135 acts as the For ring-opening step in catalysis.

It belongs to the glucosamine/galactosamine-6-phosphate isomerase family. NagB subfamily.

The catalysed reaction is alpha-D-glucosamine 6-phosphate + H2O = beta-D-fructose 6-phosphate + NH4(+). It functions in the pathway amino-sugar metabolism; N-acetylneuraminate degradation; D-fructose 6-phosphate from N-acetylneuraminate: step 5/5. Catalyzes the reversible isomerization-deamination of glucosamine 6-phosphate (GlcN6P) to form fructose 6-phosphate (Fru6P) and ammonium ion. The chain is Glucosamine-6-phosphate deaminase from Streptococcus pneumoniae serotype 2 (strain D39 / NCTC 7466).